The primary structure comprises 436 residues: Mitochondrial substrate carrier family protein Y (436 aa).

Positions 1 to 102 (MENNNKNINT…NINNNNINKK (102 aa)) are disordered. The Mitochondrial intermembrane segment spans residues 1 to 137 (MENNNKNINT…GGFLAGLSRN (137 aa)). Solcar repeat units lie at residues 135 to 226 (SRNV…TLKY) and 236 to 334 (HDTL…LKKQ). A helical membrane pass occupies residues 138 to 158 (VTRIIGSFSSGMAEESAGYPL). Residues 159-194 (DLIKTRIQLSQSGVSGGGGTNTSIIKIFKDVIKTEG) lie on the Mitochondrial matrix side of the membrane. Residues 195–215 (VIGLFKGLSSPLILSALVTAI) traverse the membrane as a helical segment. At 216–238 (QFGLFEDTLKYFRKHQYFKNHDT) the chain is on the mitochondrial intermembrane side. Residues 239 to 259 (LSLLFSGSIAGFAQSFITCPV) traverse the membrane as a helical segment. Topologically, residues 260–313 (DLVKIQMQIQGIPSSQPNSNNNNNNNKAKGNSYFTKLIYREKGLLGFYQGLSPT) are mitochondrial matrix. The helical transmembrane segment at 314-334 (LFRDVPGLAIFFTTYETLKKQ) threads the bilayer. The Mitochondrial intermembrane segment spans residues 335–347 (FGQPELSTQSPTE). A helical transmembrane segment spans residues 348–368 (FIKSFIPIVLSGGSAGVFYHG). A Solcar 3 repeat occupies 350 to 436 (KSFIPIVLSG…FLVYEMVINL (87 aa)). Residues 369-413 (LTHPFDIAKTLIQSDRSATKYKGTFDCLKQVYQNQGPKSLFKGFS) are Mitochondrial matrix-facing. Residues 414-434 (AVAIKSFQSNAVGFLVYEMVI) form a helical membrane-spanning segment. At 435–436 (NL) the chain is on the mitochondrial intermembrane side.

This sequence belongs to the mitochondrial carrier (TC 2.A.29) family.

It localises to the mitochondrion inner membrane. Mitochondrial solute carriers shuttle metabolites, nucleotides, and cofactors through the mitochondrial inner membrane. In Dictyostelium discoideum (Social amoeba), this protein is Mitochondrial substrate carrier family protein Y (mcfY).